Here is a 614-residue protein sequence, read N- to C-terminus: Chaperone protein DnaK (614 aa).

Phosphothreonine; by autocatalysis is present on Thr-175. The disordered stretch occupies residues 577-614 (QAGGAEGAADPNAAAGGAQSAPHDDNVVDADFKVDEDK). A compositionally biased stretch (low complexity) spans 583–597 (GAADPNAAAGGAQSA). Basic and acidic residues predominate over residues 598 to 614 (PHDDNVVDADFKVDEDK).

The protein belongs to the heat shock protein 70 family.

Functionally, acts as a chaperone. The chain is Chaperone protein DnaK from Clostridium beijerinckii (strain ATCC 51743 / NCIMB 8052) (Clostridium acetobutylicum).